Reading from the N-terminus, the 80-residue chain is Cell division protein ZapB (80 aa).

Residues 3–80 (FEVFEKLESK…ALLGKMEDVQ (78 aa)) are a coiled coil.

Belongs to the ZapB family. As to quaternary structure, homodimer. The ends of the coiled-coil dimer bind to each other, forming polymers. Interacts with FtsZ.

Its subcellular location is the cytoplasm. Functionally, non-essential, abundant cell division factor that is required for proper Z-ring formation. It is recruited early to the divisome by direct interaction with FtsZ, stimulating Z-ring assembly and thereby promoting cell division earlier in the cell cycle. Its recruitment to the Z-ring requires functional FtsA or ZipA. This chain is Cell division protein ZapB, found in Proteus mirabilis (strain HI4320).